The sequence spans 177 residues: MRFKVSKLMAYILRHSPWEFGLEPDEEGFVSIEELVNAVRKVYPWVTEEYIREIVERDEKGRYEIRGNKIRARYGHSYPVILRHEEDKESKVLYHGTVRRNLKGIMREGIKPMKRQYVHLSINYEDAYNTGRRHGEDVVVLIIDAECLRNKGYKILKAGKKVRIVKHVPVDCISGIL.

This sequence belongs to the KptA/TPT1 family.

Removes the 2'-phosphate from RNA via an intermediate in which the phosphate is ADP-ribosylated by NAD followed by a presumed transesterification to release the RNA and generate ADP-ribose 1''-2''-cyclic phosphate (APPR&gt;P). May function as an ADP-ribosylase. This chain is Probable RNA 2'-phosphotransferase (kptA), found in Pyrococcus horikoshii (strain ATCC 700860 / DSM 12428 / JCM 9974 / NBRC 100139 / OT-3).